The sequence spans 56 residues: Large ribosomal subunit protein bL32 (56 aa).

The disordered stretch occupies residues M1–G34.

It belongs to the bacterial ribosomal protein bL32 family.

The chain is Large ribosomal subunit protein bL32 from Sodalis glossinidius (strain morsitans).